The chain runs to 131 residues: Small ribosomal subunit protein uS8 (131 aa).

This sequence belongs to the universal ribosomal protein uS8 family. In terms of assembly, part of the 30S ribosomal subunit. Contacts proteins S5 and S12.

Functionally, one of the primary rRNA binding proteins, it binds directly to 16S rRNA central domain where it helps coordinate assembly of the platform of the 30S subunit. In Neorickettsia sennetsu (strain ATCC VR-367 / Miyayama) (Ehrlichia sennetsu), this protein is Small ribosomal subunit protein uS8.